Consider the following 634-residue polypeptide: TATA box-binding protein-associated factor RNA polymerase I subunit B (634 aa).

The RRN7-type zinc-finger motif lies at 19–51; the sequence is LVCEYCGHGSEYAEDDADNGFFTCRQCSAIHTS. 4 residues coordinate Zn(2+): C21, C24, C42, and C45. The interval 51-80 is B-reader; sequence STQNTATNPFDFPMTPAHLSAHRRPTQPTP. The tract at residues 56-117 is disordered; it reads ATNPFDFPMT…EPRDFATGAN (62 aa). Pro residues predominate over residues 77-87; that stretch reads QPTPTPKPFPA. The B-linker stretch occupies residues 81-83; the sequence is TPK. The N-terminal cyclin fold stretch occupies residues 84–281; that stretch reads PFPAPRGAAT…DKLLGSSLND (198 aa). The span at 88–98 shows a compositional bias: low complexity; sequence PRGAATGAAAP. The C-terminal cyclin fold stretch occupies residues 282–284; the sequence is CPL.

This sequence belongs to the RRN7/TAF1B family.

Its subcellular location is the nucleus. The protein resides in the nucleolus. Functionally, component of RNA polymerase I core factor complex that acts as a GTF2B/TFIIB-like factor and plays a key role in multiple steps during transcription initiation such as pre-initiation complex (PIC) assembly and postpolymerase recruitment events in polymerase I (Pol I) transcription. Binds rDNA promoters and plays a role in Pol I recruitment. In Oryza sativa subsp. indica (Rice), this protein is TATA box-binding protein-associated factor RNA polymerase I subunit B.